An 81-amino-acid polypeptide reads, in one-letter code: MTFPRALTVIDDNGLVISIIFWFLLIIILILFSIALLNIIKLCMVCCNLGRTVIVPVQHAYDAYKNFMRIKAYNHDGALLV.

The Virion surface portion of the chain corresponds to 1-19 (MTFPRALTVIDDNGLVISI). Residues 20-40 (IFWFLLIIILILFSIALLNII) traverse the membrane as a helical segment. At 41–81 (KLCMVCCNLGRTVIVPVQHAYDAYKNFMRIKAYNHDGALLV) the chain is on the intravirion side.

It belongs to the alphacoronaviruses E protein family. As to quaternary structure, homopentamer. Interacts with membrane protein M in the budding compartment of the host cell, which is located between endoplasmic reticulum and the Golgi complex. Interacts with Nucleoprotein.

Its subcellular location is the host Golgi apparatus membrane. Plays a central role in virus morphogenesis and assembly. Acts as a viroporin and self-assembles in host membranes forming pentameric protein-lipid pores that allow ion transport. Also plays a role in the induction of apoptosis. The polypeptide is Envelope small membrane protein (Porcine transmissible gastroenteritis coronavirus (strain FS772/70) (TGEV)).